Reading from the N-terminus, the 93-residue chain is LSM complex subunit LSM5 (93 aa).

In terms of domain architecture, Sm spans 7-87 (LPLEVIDKTI…IAILVPGGKK (81 aa)).

It belongs to the snRNP Sm proteins family. In terms of assembly, component of the heptameric LSM1-LSM7 complex that forms a seven-membered ring structure with a donut shape. The LSm subunits are arranged in the order LSM1, LSM2, LSM3, LSM6, LSM5, LSM7 and LSM4. Except for LSM1, where a C-terminal helix crosses the ring structure to form additional interactions with LSM3 and LSM6, each subunit interacts only with its two neighboring subunits. The LSM1-LSM7 complex interacts with PAT1; within the complex PAT1 has direct interactions with LSM2 and LSM3. The LSM1-LSM7 complex interacts with XRN1. Component of the heptameric LSM2-LSM8 complex that forms a seven-membered ring structure with a donut shape; an RNA strand can pass through the hole in the center of the ring structure. The LSm subunits are arranged in the order LSM8, LSM2, LSM3, LSM6, LSM5, LSM7 and LSM4. Component of the spliceosome U4/U6-U5 tri-snRNP complex composed of the U4, U6 and U5 snRNAs and at least PRP3, PRP4, PRP6, PRP8, PRP18, PRP31, PRP38, SNU13, SNU23, SNU66, SNU114, SPP381, SMB1, SMD1, SMD2, SMD3, SMX2, SMX3, LSM2, LSM3, LSM4, LSM5, LSM6, LSM7, LSM8, BRR2 and DIB1. May be found in a complex comprising LSM2-LSM7 without LSM1 or LSM8; the complex associates with pre-P RNA and snoRNA SNR5.

Its subcellular location is the nucleus. It localises to the nucleolus. It is found in the cytoplasm. In terms of biological role, component of LSm protein complexes, which are involved in RNA processing and may function in a chaperone-like manner. Component of the cytoplasmic LSM1-LSM7 complex which is involved in mRNA degradation by activating the decapping step. Together with PAT1, the LSM1-LSM7 complex binds to osmotic stress-activated mRNAs to attenuate the osmotic stress response, probably by limiting ribosome access to the mRNA and consequently translation. Component of the nuclear LSM2-LSM8 complex, which is involved in spliceosome assembly. The LSM2-LSM8 complex plays a role in the biogenesis of the spliceosomal U4/U6-U5 tri-snRNP complex by accelerating PRP24-mediated annealing of U4/U6 di-snRNA. The LSM2-LSM8 complex binds U6 snRNA terminating with a non-cyclic 3' phosphate group. LSM2-LSM8 is probably also involved in degradation of nuclear pre-mRNA by targeting them for decapping. LSM2-LSM8 could be involved in processing of pre-tRNAs, pre-rRNAs and U3 snoRNA, although involvement may be indirect. In a complex that probably contains LSM2-LSM7, but not LSM1 or LSM8, associates with the precursor of the RNA component of RNase P (pre-P RNA) and may be involved in maturing pre-P RNA; the complex also associates with snoRNA SNR5. The polypeptide is LSM complex subunit LSM5 (LSM5) (Saccharomyces cerevisiae (strain ATCC 204508 / S288c) (Baker's yeast)).